Here is a 340-residue protein sequence, read N- to C-terminus: Protein phosphatase PTC7 homolog fig (340 aa).

The region spanning 58–314 (RAQAETIQAP…DDITVVLASV (257 aa)) is the PPM-type phosphatase domain. Mn(2+)-binding residues include aspartate 90, glycine 91, and aspartate 236.

It belongs to the PP2C family. The cofactor is Mg(2+). Mn(2+) is required as a cofactor.

The enzyme catalyses O-phospho-L-seryl-[protein] + H2O = L-seryl-[protein] + phosphate. It carries out the reaction O-phospho-L-threonyl-[protein] + H2O = L-threonyl-[protein] + phosphate. In Drosophila pseudoobscura pseudoobscura (Fruit fly), this protein is Protein phosphatase PTC7 homolog fig.